Consider the following 371-residue polypeptide: RNA-binding protein 48 (371 aa).

The RRM domain occupies 46–124; the sequence is QYLLIQGVPA…GLLHVCYAPE (79 aa). 2 disordered regions span residues 157 to 191 and 348 to 371; these read KPVP…PESP and VPKP…RRRI. Basic and acidic residues predominate over residues 158 to 170; it reads PVPEQKGTKDSRQ.

It belongs to the RBM48 family. In terms of assembly, component of the minor spliceosome. Within this complex, interacts with ARMC7 and PRPF8/PRP8.

As a component of the minor spliceosome, involved in the splicing of U12-type introns in pre-mRNAs. The chain is RNA-binding protein 48 (Rbm48) from Mus musculus (Mouse).